The following is a 187-amino-acid chain: Threonylcarbamoyl-AMP synthase (187 aa).

The YrdC-like domain maps to 3-187; the sequence is EVLPADVAEL…AKSGQVIRKG (185 aa).

Belongs to the SUA5 family. TsaC subfamily.

Its subcellular location is the cytoplasm. It carries out the reaction L-threonine + hydrogencarbonate + ATP = L-threonylcarbamoyladenylate + diphosphate + H2O. In terms of biological role, required for the formation of a threonylcarbamoyl group on adenosine at position 37 (t(6)A37) in tRNAs that read codons beginning with adenine. Catalyzes the conversion of L-threonine, HCO(3)(-)/CO(2) and ATP to give threonylcarbamoyl-AMP (TC-AMP) as the acyladenylate intermediate, with the release of diphosphate. This Shewanella halifaxensis (strain HAW-EB4) protein is Threonylcarbamoyl-AMP synthase.